The chain runs to 873 residues: Nonsense-mediated mRNA decay factor SMG8 (873 aa).

The segment at 531 to 604 (AKKMAQREDE…ESMASKTERE (74 aa)) is disordered. Over residues 540 to 550 (ELAEEDTDLDI) the composition is skewed to acidic residues. Low complexity-rich tracts occupy residues 551 to 562 (PESLLDPDSTSP) and 574 to 583 (SSSESSSQES). Residues 591–604 (SRRDESMASKTERE) show a composition bias toward basic and acidic residues.

It belongs to the SMG8 family.

Its function is as follows. Involved in nonsense-mediated decay (NMD) of mRNAs containing premature stop codons. Probable component of kinase complex containing smg-1 and recruited to stalled ribosomes. In Caenorhabditis elegans, this protein is Nonsense-mediated mRNA decay factor SMG8 (smg-8).